Consider the following 342-residue polypeptide: Putative TPR repeat-containing protein R856 (342 aa).

TPR repeat units follow at residues Val36–Gly69, Phe77–Met110, Val119–Leu152, Ala161–Lys194, Ala203–Ile236, Ala245–Val278, and Ala291–Thr324.

The chain is Putative TPR repeat-containing protein R856 from Acanthamoeba polyphaga mimivirus (APMV).